Here is a 281-residue protein sequence, read N- to C-terminus: Sulfur carrier protein FdhD (281 aa).

The Cysteine persulfide intermediate role is filled by cysteine 117.

Belongs to the FdhD family.

It is found in the cytoplasm. Its function is as follows. Required for formate dehydrogenase (FDH) activity. Acts as a sulfur carrier protein that transfers sulfur from IscS to the molybdenum cofactor prior to its insertion into FDH. This is Sulfur carrier protein FdhD from Xanthomonas axonopodis pv. citri (strain 306).